Reading from the N-terminus, the 247-residue chain is Probable transcriptional regulatory protein BHWA1_01533 (247 aa).

Positions 1-22 (MSGHSKWASIKHKKAANDSKKG) are disordered.

The protein belongs to the TACO1 family.

The protein localises to the cytoplasm. The protein is Probable transcriptional regulatory protein BHWA1_01533 of Brachyspira hyodysenteriae (strain ATCC 49526 / WA1).